The primary structure comprises 235 residues: MKHEEANKEIGGRGAEGQRSKRVGGNSKIQNIQSPAPNPQPIVPNTQSPVPNLDNWLEIGKIVSPQGLSGELKVYPVSDFPERFEVPGKRWLLHLDGTEPQPIQLLTGRYISNKNLYVIKLAGVENCDQAEALRGCKLMVPASDRPQLAEDEYHVLDLIGLEVFMQASGELVGTVVDIIPAGNDLLEVKLHPSFTTDKKQKTVLIPFVEAIAPVVDLKSNRIEITPPPGLLEINN.

The segment covering methionine 1–arginine 19 has biased composition (basic and acidic residues). Residues methionine 1 to proline 49 form a disordered region. The region spanning glutamate 150–leucine 230 is the PRC barrel domain.

Belongs to the RimM family. In terms of assembly, binds ribosomal protein uS19.

The protein resides in the cytoplasm. An accessory protein needed during the final step in the assembly of 30S ribosomal subunit, possibly for assembly of the head region. Essential for efficient processing of 16S rRNA. May be needed both before and after RbfA during the maturation of 16S rRNA. It has affinity for free ribosomal 30S subunits but not for 70S ribosomes. This chain is Ribosome maturation factor RimM, found in Nostoc punctiforme (strain ATCC 29133 / PCC 73102).